Reading from the N-terminus, the 200-residue chain is Protein Mbur_1344 (200 aa).

The region spanning 5 to 192 (SEGEQTVRLA…EVEPRGDIEE (188 aa)) is the AMMECR1 domain.

The sequence is that of Protein Mbur_1344 from Methanococcoides burtonii (strain DSM 6242 / NBRC 107633 / OCM 468 / ACE-M).